Reading from the N-terminus, the 923-residue chain is RNA polymerase-associated protein RapA (923 aa).

The Helicase ATP-binding domain occupies 162 to 332 (EVGNRVNPRV…FARLRLLDPE (171 aa)). ATP is bound at residue 175 to 182 (DEVGLGKT). The short motif at 278-281 (DEAH) is the DEAH box element. The 155-residue stretch at 443–597 (KIDWLIDFLK…TCPMGMALFS (155 aa)) folds into the Helicase C-terminal domain.

Belongs to the SNF2/RAD54 helicase family. RapA subfamily. In terms of assembly, interacts with the RNAP. Has a higher affinity for the core RNAP than for the holoenzyme. Its ATPase activity is stimulated by binding to RNAP.

In terms of biological role, transcription regulator that activates transcription by stimulating RNA polymerase (RNAP) recycling in case of stress conditions such as supercoiled DNA or high salt concentrations. Probably acts by releasing the RNAP, when it is trapped or immobilized on tightly supercoiled DNA. Does not activate transcription on linear DNA. Probably not involved in DNA repair. This Haemophilus influenzae (strain ATCC 51907 / DSM 11121 / KW20 / Rd) protein is RNA polymerase-associated protein RapA.